Consider the following 572-residue polypeptide: MEYWKHTNHGKDAGNELETSMATHGNKLTNKIIYILWTIILVLLSIVFIIVLINSIKSEKAHESLLRDINNEFMEITGKIQMASDNTNDLIQSGVNTRLLTIQSHVQNYIPISLTQQMSDLRKFISEITIRNDNQEVLPQRITHDVGIKPLNPDDFWRCTSGLPSLMKTPKIRLMPGPGLLAMPTTDDGCIRTPSLVINDLIYAYTSNLITRGCQDIGKSYQVLQIGIITVNSDLVPDLNPRISHTFNINDNRKSCSLALLNTDVYQLCSTPKVDERSDYASSGIEDIVLDIVNYDGSISTTRFKNNNISFDQPYAALYPSVGPGIYYKGKIIFLGYGGLEHPINENVICNTTGCPGKTQRDCNQASHSPWFSDRRMVNSIIVVDKGLNSTPKLKVWTISMRQNYWGSEGRLLLLGNKIYIYTRSTSWHSKLQLGIIDITDYSDIRIKWTWHNVLSRPGNNECPWGHSCPDGCITGVYTDAYPLNPTGSIVSSVILDSQKSRVNPVITYSTATERVNELAIRNRTLSAGYTTTSCITHYNKGYCFHIVEINHKSLNTFQPMLFKTEIPKSCS.

Topologically, residues 1 to 31 (MEYWKHTNHGKDAGNELETSMATHGNKLTNK) are intravirion. A helical membrane pass occupies residues 32–52 (IIYILWTIILVLLSIVFIIVL). The Virion surface segment spans residues 53–572 (INSIKSEKAH…FKTEIPKSCS (520 aa)). 2 cysteine pairs are disulfide-bonded: Cys190–Cys214 and Cys256–Cys269. The involved in neuraminidase activity stretch occupies residues 252-257 (NRKSCS). N-linked (GlcNAc...) asparagine; by host glycans are attached at residues Asn308 and Asn351. 2 cysteine pairs are disulfide-bonded: Cys355–Cys469 and Cys463–Cys473. Asn523 carries N-linked (GlcNAc...) asparagine; by host glycosylation. An intrachain disulfide couples Cys535 to Cys544.

Belongs to the paramyxoviruses hemagglutinin-neuraminidase family. Homotetramer; composed of disulfide-linked homodimers. Interacts with F protein trimer.

Its subcellular location is the virion membrane. The protein localises to the host cell membrane. The catalysed reaction is Hydrolysis of alpha-(2-&gt;3)-, alpha-(2-&gt;6)-, alpha-(2-&gt;8)- glycosidic linkages of terminal sialic acid residues in oligosaccharides, glycoproteins, glycolipids, colominic acid and synthetic substrates.. Functionally, attaches the virus to sialic acid-containing cell receptors and thereby initiating infection. Binding of HN protein to the receptor induces a conformational change that allows the F protein to trigger virion/cell membranes fusion. Its function is as follows. Neuraminidase activity ensures the efficient spread of the virus by dissociating the mature virions from the neuraminic acid containing glycoproteins. In Homo sapiens (Human), this protein is Hemagglutinin-neuraminidase (HN).